The primary structure comprises 147 residues: Ribosomal RNA large subunit methyltransferase H (147 aa).

Residues Leu64, Gly96, and 115 to 120 contribute to the S-adenosyl-L-methionine site; that span reads FSKMTF.

Belongs to the RNA methyltransferase RlmH family. As to quaternary structure, homodimer.

It localises to the cytoplasm. The catalysed reaction is pseudouridine(1915) in 23S rRNA + S-adenosyl-L-methionine = N(3)-methylpseudouridine(1915) in 23S rRNA + S-adenosyl-L-homocysteine + H(+). In terms of biological role, specifically methylates the pseudouridine at position 1915 (m3Psi1915) in 23S rRNA. The protein is Ribosomal RNA large subunit methyltransferase H of Acholeplasma laidlawii (strain PG-8A).